The chain runs to 98 residues: Co-chaperonin GroES (98 aa).

Positions 35–57 (EKPQEGKVISAGPGRVDDKGTRV) are disordered.

It belongs to the GroES chaperonin family. As to quaternary structure, heptamer of 7 subunits arranged in a ring. Interacts with the chaperonin GroEL.

The protein resides in the cytoplasm. Its function is as follows. Together with the chaperonin GroEL, plays an essential role in assisting protein folding. The GroEL-GroES system forms a nano-cage that allows encapsulation of the non-native substrate proteins and provides a physical environment optimized to promote and accelerate protein folding. GroES binds to the apical surface of the GroEL ring, thereby capping the opening of the GroEL channel. This chain is Co-chaperonin GroES, found in Cutibacterium acnes (strain DSM 16379 / KPA171202) (Propionibacterium acnes).